Here is a 360-residue protein sequence, read N- to C-terminus: UDP-3-O-acylglucosamine N-acyltransferase (360 aa).

The active-site Proton acceptor is His-253.

This sequence belongs to the transferase hexapeptide repeat family. LpxD subfamily. As to quaternary structure, homotrimer.

It catalyses the reaction a UDP-3-O-[(3R)-3-hydroxyacyl]-alpha-D-glucosamine + a (3R)-hydroxyacyl-[ACP] = a UDP-2-N,3-O-bis[(3R)-3-hydroxyacyl]-alpha-D-glucosamine + holo-[ACP] + H(+). It participates in bacterial outer membrane biogenesis; LPS lipid A biosynthesis. In terms of biological role, catalyzes the N-acylation of UDP-3-O-acylglucosamine using 3-hydroxyacyl-ACP as the acyl donor. Is involved in the biosynthesis of lipid A, a phosphorylated glycolipid that anchors the lipopolysaccharide to the outer membrane of the cell. The polypeptide is UDP-3-O-acylglucosamine N-acyltransferase (Burkholderia multivorans (strain ATCC 17616 / 249)).